The sequence spans 474 residues: UDP glycosyltransferase 9 (474 aa).

UDP-alpha-D-glucose contacts are provided by residues Ser296, 349–350 (WC), 367–375 (HCGWNSTLE), and 389–392 (WADQ).

The protein belongs to the UDP-glycosyltransferase family.

The protein is UDP glycosyltransferase 9 of Catharanthus roseus (Madagascar periwinkle).